Here is a 434-residue protein sequence, read N- to C-terminus: Tol-Pal system protein TolB (434 aa).

Residues Met1–Ala21 form the signal peptide. The disordered stretch occupies residues Gly411–Pro434.

This sequence belongs to the TolB family. In terms of assembly, the Tol-Pal system is composed of five core proteins: the inner membrane proteins TolA, TolQ and TolR, the periplasmic protein TolB and the outer membrane protein Pal. They form a network linking the inner and outer membranes and the peptidoglycan layer.

The protein localises to the periplasm. In terms of biological role, part of the Tol-Pal system, which plays a role in outer membrane invagination during cell division and is important for maintaining outer membrane integrity. The protein is Tol-Pal system protein TolB of Anaeromyxobacter dehalogenans (strain 2CP-C).